A 404-amino-acid chain; its full sequence is Caspase-1 (404 aa).

The CARD domain occupies 1-91 (MADKVLKDKR…HLAQTLGLSS (91 aa)). Positions 1-119 (MADKVLKDKR…SLPAFVENMP (119 aa)) are excised as a propeptide. Catalysis depends on residues His237 and Cys285. Positions 298-316 (SPKASTDSWTHQPLMLQSD) are excised as a propeptide. Position 302 is a phosphoserine (Ser302).

This sequence belongs to the peptidase C14A family. In terms of assembly, heterotetramer that consists of two anti-parallel arranged heterodimers, each one formed by a 20 kDa (Caspase-1 subunit p20) and a 10 kDa (Caspase-1 subunit p10) subunit. May be a component of the inflammasome, a protein complex which also includes PYCARD, CARD8 and NLRP2 and whose function would be the activation of pro-inflammatory caspases. Component of the AIM2 PANoptosome complex, a multiprotein complex that drives inflammatory cell death (PANoptosis). Both the p10 and p20 subunits interact with MEFV. Interacts with CARD17P/INCA and CARD18. Interacts with SERPINB1; this interaction regulates CASP1 activity. As to quaternary structure, heterotetramer that consists of two anti-parallel arranged heterodimers, each one formed by a 20 kDa (Caspase-1 subunit p20) and a 10 kDa (Caspase-1 subunit p10) subunit. In terms of processing, the two subunits are derived from the precursor sequence by an autocatalytic mechanism. Post-translationally, ubiquitinated via 'Lys-11'-linked polyubiquitination. Deubiquitinated by USP8.

It is found in the cytoplasm. Its subcellular location is the cell membrane. The enzyme catalyses Strict requirement for an Asp residue at position P1 and has a preferred cleavage sequence of Tyr-Val-Ala-Asp-|-.. In terms of biological role, thiol protease involved in a variety of inflammatory processes by proteolytically cleaving other proteins, such as the precursors of the inflammatory cytokines interleukin-1 beta (IL1B) and interleukin 18 (IL18) as well as the pyroptosis inducer Gasdermin-D (GSDMD), into active mature peptides. Plays a key role in cell immunity as an inflammatory response initiator: once activated through formation of an inflammasome complex, it initiates a pro-inflammatory response through the cleavage of the two inflammatory cytokines IL1B and IL18, releasing the mature cytokines which are involved in a variety of inflammatory processes. Cleaves a tetrapeptide after an Asp residue at position P1. Also initiates pyroptosis, a programmed lytic cell death pathway, through cleavage of GSDMD. In contrast to cleavage of interleukin IL1B, recognition and cleavage of GSDMD is not strictly dependent on the consensus cleavage site but depends on an exosite interface on CASP1 that recognizes and binds the Gasdermin-D, C-terminal (GSDMD-CT) part. Cleaves and activates CASP7 in response to bacterial infection, promoting plasma membrane repair. Upon inflammasome activation, during DNA virus infection but not RNA virus challenge, controls antiviral immunity through the cleavage of CGAS, rendering it inactive. In apoptotic cells, cleaves SPHK2 which is released from cells and remains enzymatically active extracellularly. The sequence is that of Caspase-1 (CASP1) from Canis lupus familiaris (Dog).